A 138-amino-acid chain; its full sequence is MSGTLLAFDFGTKSIGVAIGQRITGTARALPAIKAQDGTPDWNIIERLLKEWQPDEIIVGLPLNMDGTEQPLTARARKFANRIHGRFGVLVTLHDERLSTIEARSGLFEQGGYRALNKGKVDSASAVIILESYFEQGY.

Belongs to the YqgF nuclease family.

It is found in the cytoplasm. Functionally, could be a nuclease involved in processing of the 5'-end of pre-16S rRNA. In Citrobacter koseri (strain ATCC BAA-895 / CDC 4225-83 / SGSC4696), this protein is Putative pre-16S rRNA nuclease.